The following is a 362-amino-acid chain: Putative G-protein coupled receptor B0244.5 (362 aa).

The Extracellular portion of the chain corresponds to 1 to 47; sequence MQNIFENCSYHSKYEPYFLNCTNTTNQCVLIQDVGIIQAIDFWANLC. Residues Asn-7, Asn-20, and Asn-23 are each glycosylated (N-linked (GlcNAc...) asparagine). A helical transmembrane segment spans residues 48–68; that stretch reads IPFTLFVIAFILNGYYLSILI. Topologically, residues 69 to 81 are cytoplasmic; the sequence is PEFRKMNDTTKKQ. The helical transmembrane segment at 82-102 threads the bilayer; it reads YIFVVSRGISSLSASSIMMVL. The Extracellular portion of the chain corresponds to 103-125; sequence RLLKMLSTSFTVYFLFFLIDDLS. The chain crosses the membrane as a helical span at residues 126-145; the sequence is FYSLLGSYVGSTLLLYLATV. Residues 146–161 lie on the Cytoplasmic side of the membrane; it reads RPIFYSIQISVRIVYK. Residues 162–182 form a helical membrane-spanning segment; the sequence is FALVNVLLAVVLAVTTAIFQA. Residues 183 to 204 lie on the Extracellular side of the membrane; it reads AEVSDGFFHCDVQHCQPIINIA. Residues 205–225 form a helical membrane-spanning segment; it reads MFVIIATSFLIPIITLTFVLV. Topologically, residues 226-255 are cytoplasmic; that stretch reads TLCFQKSRTQSIGNFTVDNSVYKSARTRLA. A helical membrane pass occupies residues 256–276; it reads WTLFTFTLISLTEMIPSSFLV. Over 277 to 295 the chain is Extracellular; that stretch reads NLRVEDTITICVNFYQADH. A helical membrane pass occupies residues 296 to 316; the sequence is LFIPAIMNSFQTLAWGIALIV. At 317–362 the chain is on the cytoplasmic side; the sequence is DPLCALLFDPRIRKVWVEHVSRLSIIIGRSFEACCHSNLNKEIQDK.

Belongs to the G-protein coupled receptor 1 family. B0244 subfamily.

It localises to the cell membrane. The protein is Putative G-protein coupled receptor B0244.5 of Caenorhabditis elegans.